We begin with the raw amino-acid sequence, 440 residues long: Translation initiation factor eIF2B subunit gamma (440 aa).

The protein belongs to the eIF-2B gamma/epsilon subunits family. Component of the translation initiation factor 2B (eIF2B) complex which is a heterodecamer of two sets of five different subunits: alpha, beta, gamma, delta and epsilon. Subunits alpha, beta and delta comprise a regulatory subcomplex and subunits epsilon and gamma comprise a catalytic subcomplex. Within the complex, the hexameric regulatory complex resides at the center, with the two heterodimeric catalytic subcomplexes bound on opposite sides.

It localises to the cytoplasm. The protein localises to the cytosol. Functionally, acts as a component of the translation initiation factor 2B (eIF2B) complex, which catalyzes the exchange of GDP for GTP on the eukaryotic initiation factor 2 (eIF2) complex gamma subunit. Its guanine nucleotide exchange factor activity is repressed when bound to eIF2 complex phosphorylated on the alpha subunit, thereby limiting the amount of methionyl-initiator methionine tRNA available to the ribosome and consequently global translation is repressed. The chain is Translation initiation factor eIF2B subunit gamma (eif2b3) from Dictyostelium discoideum (Social amoeba).